The primary structure comprises 500 residues: L-arabinose isomerase (500 aa).

Residues E306, E333, H350, and H450 each coordinate Mn(2+).

Belongs to the arabinose isomerase family. As to quaternary structure, homohexamer. Requires Mn(2+) as cofactor.

It carries out the reaction beta-L-arabinopyranose = L-ribulose. The protein operates within carbohydrate degradation; L-arabinose degradation via L-ribulose; D-xylulose 5-phosphate from L-arabinose (bacterial route): step 1/3. Its function is as follows. Catalyzes the conversion of L-arabinose to L-ribulose. This Shigella flexneri protein is L-arabinose isomerase.